A 130-amino-acid chain; its full sequence is Annexin A1 (130 aa).

An Isoglutamyl lysine isopeptide (Gln-Lys) (interchain with K-?) cross-link involves residue Gln-19. At Ser-24 the chain carries Phosphoserine; by PKC. Annexin repeat units follow at residues Phe-37 to Lys-108 and Thr-109 to Arg-130. 11 residues coordinate Ca(2+): Gly-54, Val-55, Glu-57, Lys-92, Leu-95, Glu-100, Met-122, Gly-124, Gly-126, Thr-127, and Arg-130.

The protein belongs to the annexin family.

Its subcellular location is the nucleus. It localises to the cytoplasm. The protein localises to the cell projection. The protein resides in the cilium. It is found in the basolateral cell membrane. Its subcellular location is the lateral cell membrane. It localises to the cell membrane. The protein localises to the apical cell membrane. The protein resides in the membrane. It is found in the early endosome. Its subcellular location is the cytoplasmic vesicle membrane. It localises to the endosome membrane. The protein localises to the secreted. The protein resides in the extracellular space. It is found in the extracellular exosome. Its subcellular location is the cytoplasmic vesicle. It localises to the secretory vesicle lumen. The protein localises to the phagocytic cup. Functionally, plays important roles in the innate immune response as effector of glucocorticoid-mediated responses and regulator of the inflammatory process. Has anti-inflammatory activity. Plays a role in glucocorticoid-mediated down-regulation of the early phase of the inflammatory response. Promotes resolution of inflammation and wound healing. Functions at least in part by activating the formyl peptide receptors and downstream signaling cascades. Promotes chemotaxis of granulocytes and monocytes via activation of the formyl peptide receptors. Contributes to the adaptive immune response by enhancing signaling cascades that are triggered by T-cell activation, regulates differentiation and proliferation of activated T-cells. Promotes the differentiation of T-cells into Th1 cells and negatively regulates differentiation into Th2 cells. Has no effect on unstimulated T-cells. Promotes rearrangement of the actin cytoskeleton, cell polarization and cell migration. Negatively regulates hormone exocytosis via activation of the formyl peptide receptors and reorganization of the actin cytoskeleton. Has high affinity for Ca(2+) and can bind up to eight Ca(2+) ions. Displays Ca(2+)-dependent binding to phospholipid membranes. Plays a role in the formation of phagocytic cups and phagosomes. Plays a role in phagocytosis by mediating the Ca(2+)-dependent interaction between phagosomes and the actin cytoskeleton. This Gallus gallus (Chicken) protein is Annexin A1 (ANXA1).